A 147-amino-acid chain; its full sequence is Small ribosomal subunit protein uS12 (147 aa).

The protein belongs to the universal ribosomal protein uS12 family. As to quaternary structure, part of the 30S ribosomal subunit.

Functionally, with S4 and S5 plays an important role in translational accuracy. Located at the interface of the 30S and 50S subunits. The polypeptide is Small ribosomal subunit protein uS12 (Methanococcus maripaludis (strain DSM 14266 / JCM 13030 / NBRC 101832 / S2 / LL)).